Here is a 171-residue protein sequence, read N- to C-terminus: MAEQRNIFLIGPMGAGKSTIGRHLAQMLHLDFLDSDAEIEKKTGADIAWVFDVEGEEGFRNREQSMIDELTQKHGIVLATGGGALIRPENRIHLSARGIVVYLKTSVNKQLARTLKDKRRPLLQTDDPRTVLEALAEKRNEFYDEVADYTMETDEQSAKVVASQIIALLDF.

14–19 (GAGKST) contacts ATP. Serine 18 lines the Mg(2+) pocket. Aspartate 36, arginine 60, and glycine 82 together coordinate substrate. Position 120 (arginine 120) interacts with ATP. Arginine 139 contacts substrate. Glutamine 156 serves as a coordination point for ATP.

Belongs to the shikimate kinase family. As to quaternary structure, monomer. It depends on Mg(2+) as a cofactor.

Its subcellular location is the cytoplasm. The enzyme catalyses shikimate + ATP = 3-phosphoshikimate + ADP + H(+). It participates in metabolic intermediate biosynthesis; chorismate biosynthesis; chorismate from D-erythrose 4-phosphate and phosphoenolpyruvate: step 5/7. Catalyzes the specific phosphorylation of the 3-hydroxyl group of shikimic acid using ATP as a cosubstrate. The sequence is that of Shikimate kinase from Psychromonas ingrahamii (strain DSM 17664 / CCUG 51855 / 37).